The chain runs to 358 residues: Pyruvate dehydrogenase E1 component subunit alpha (358 aa).

In terms of assembly, heterodimer of an alpha and a beta chain. It depends on thiamine diphosphate as a cofactor.

The enzyme catalyses N(6)-[(R)-lipoyl]-L-lysyl-[protein] + pyruvate + H(+) = N(6)-[(R)-S(8)-acetyldihydrolipoyl]-L-lysyl-[protein] + CO2. Functionally, the pyruvate dehydrogenase complex catalyzes the overall conversion of pyruvate to acetyl-CoA and CO(2). It contains multiple copies of three enzymatic components: pyruvate dehydrogenase (E1), dihydrolipoamide acetyltransferase (E2) and lipoamide dehydrogenase (E3). The sequence is that of Pyruvate dehydrogenase E1 component subunit alpha (pdhA) from Mycoplasma pneumoniae (strain ATCC 29342 / M129 / Subtype 1) (Mycoplasmoides pneumoniae).